Here is a 275-residue protein sequence, read N- to C-terminus: Tryptophan synthase alpha chain (275 aa).

E51 functions as the Proton acceptor in the catalytic mechanism.

The protein belongs to the TrpA family. In terms of assembly, tetramer of two alpha and two beta chains.

It catalyses the reaction (1S,2R)-1-C-(indol-3-yl)glycerol 3-phosphate + L-serine = D-glyceraldehyde 3-phosphate + L-tryptophan + H2O. It functions in the pathway amino-acid biosynthesis; L-tryptophan biosynthesis; L-tryptophan from chorismate: step 5/5. In terms of biological role, the alpha subunit is responsible for the aldol cleavage of indoleglycerol phosphate to indole and glyceraldehyde 3-phosphate. This is Tryptophan synthase alpha chain from Caulobacter vibrioides (strain ATCC 19089 / CIP 103742 / CB 15) (Caulobacter crescentus).